The primary structure comprises 262 residues: MAVGKNKRTSKGKKGGKKKVTDVFTKKEWYDLKAPKMFLVRNFGKTLVTKTIGKKLATDSLKGRIYEVNLADLNNDEDQAHKKIKLSCDHIINRDCYTDFCGLSITRDKLCSLIRKGYTLIEGHTDVKTLDNYHLRMFCIAFTKKRQNQTKSTCYAQTSQIKKIRKKMVDIMTAEASKVLLKDLVKKFIPESIGKEIEKQCKKIYPLQNVLIRKVKILKRPKLDISKLMELHTDPKEESGKNVNALPESKEATNILTAELKH.

This sequence belongs to the eukaryotic ribosomal protein eS1 family. In terms of assembly, component of the small ribosomal subunit. Mature ribosomes consist of a small (40S) and a large (60S) subunit. The 40S subunit contains about 32 different proteins and 1 molecule of RNA (18S). The 60S subunit contains about 42 different proteins and 3 molecules of RNA (28S, 5.8S and 5S).

It is found in the cytoplasm. In terms of biological role, component of the ribosome, a large ribonucleoprotein complex responsible for the synthesis of proteins in the cell. The small ribosomal subunit (SSU) binds messenger RNAs (mRNAs) and translates the encoded message by selecting cognate aminoacyl-transfer RNA (tRNA) molecules. The large subunit (LSU) contains the ribosomal catalytic site termed the peptidyl transferase center (PTC), which catalyzes the formation of peptide bonds, thereby polymerizing the amino acids delivered by tRNAs into a polypeptide chain. The nascent polypeptides leave the ribosome through a tunnel in the LSU and interact with protein factors that function in enzymatic processing, targeting, and the membrane insertion of nascent chains at the exit of the ribosomal tunnel. The protein is Small ribosomal subunit protein eS1 of Plasmodium falciparum (isolate 3D7).